A 415-amino-acid polypeptide reads, in one-letter code: Stimulator of interferon genes protein (415 aa).

The 135-residue stretch at 29–163 (HVYHAFISYC…DIIQAISKPE (135 aa)) folds into the TIR domain. E104 is an active-site residue. Residue R256 coordinates 2',3'-cGAMP. A disordered region spans residues 387–415 (KSPSSTNMVKSEPNIYREESGKTKSVERG). Positions 401–415 (IYREESGKTKSVERG) are enriched in basic and acidic residues.

In the N-terminal section; belongs to the Toll-like receptor family. It in the C-terminal section; belongs to the TMEM173 family. As to quaternary structure, homodimer.

It carries out the reaction NAD(+) + H2O = ADP-D-ribose + nicotinamide + H(+). Its function is as follows. Sensor of cytosolic DNA from bacteria and viruses that promotes autophagy. Binds c-di-AMP, 2'3'-cGAMP, 3'3'-cGAMP and to a lesser extent c-di-GMP. Nucleotide binding has not been seen to stimulate NAD(+) hydrolase activity. In Magallana gigas (Pacific oyster), this protein is Stimulator of interferon genes protein.